The primary structure comprises 469 residues: tRNA (cytosine(72)-C(5))-methyltransferase NSUN6 (469 aa).

One can recognise a PUA domain in the interval 111–203 (QCEAIVGAQC…MGIRMTEPVY (93 aa)). S-adenosyl-L-methionine is bound by residues 242 to 248 (CAAPGGK), Asp-266, Asp-293, and Asp-323. Cys-373 functions as the Nucleophile in the catalytic mechanism. Position 419 is an N6-acetyllysine (Lys-419).

Belongs to the class I-like SAM-binding methyltransferase superfamily. RsmB/NOP family.

The protein localises to the cytoplasm. The catalysed reaction is cytidine(72) in tRNA(Thr) + S-adenosyl-L-methionine = 5-methylcytidine(72) in tRNA(Thr) + S-adenosyl-L-homocysteine + H(+). It catalyses the reaction cytidine(72) in tRNA(Cys) + S-adenosyl-L-methionine = 5-methylcytidine(72) in tRNA(Cys) + S-adenosyl-L-homocysteine + H(+). In terms of biological role, S-adenosyl-L-methionine-dependent methyltransferase that specifically methylates the C5 position of cytosine 72 in tRNA(Thr)(TGT) and tRNA(Cys)(GCA). In vitro also methylates tRNA(Thr)(AGT). Methylation requires, in the acceptor stem region, the presence of the 3'-CCA terminus, the target site C72, the discriminator base U73, and the second and third base pairs (2:71 and 3:70) in the tRNA substrates. The sequence is that of tRNA (cytosine(72)-C(5))-methyltransferase NSUN6 from Homo sapiens (Human).